Here is a 238-residue protein sequence, read N- to C-terminus: 2-C-methyl-D-erythritol 4-phosphate cytidylyltransferase (238 aa).

The protein belongs to the IspD/TarI cytidylyltransferase family. IspD subfamily.

It catalyses the reaction 2-C-methyl-D-erythritol 4-phosphate + CTP + H(+) = 4-CDP-2-C-methyl-D-erythritol + diphosphate. It functions in the pathway isoprenoid biosynthesis; isopentenyl diphosphate biosynthesis via DXP pathway; isopentenyl diphosphate from 1-deoxy-D-xylulose 5-phosphate: step 2/6. Its function is as follows. Catalyzes the formation of 4-diphosphocytidyl-2-C-methyl-D-erythritol from CTP and 2-C-methyl-D-erythritol 4-phosphate (MEP). The chain is 2-C-methyl-D-erythritol 4-phosphate cytidylyltransferase from Leptospira interrogans serogroup Icterohaemorrhagiae serovar copenhageni (strain Fiocruz L1-130).